The sequence spans 355 residues: Holliday junction branch migration complex subunit RuvB (355 aa).

The segment at 4-190 (TDKLAAERII…FGIVARLEFY (187 aa)) is large ATPase domain (RuvB-L). ATP-binding positions include leucine 29, arginine 30, glycine 71, lysine 74, threonine 75, threonine 76, 137 to 139 (EDY), arginine 180, tyrosine 190, and arginine 227. Threonine 75 provides a ligand contact to Mg(2+). A small ATPAse domain (RuvB-S) region spans residues 191–261 (DADQLSRIVQ…IADAALAMLD (71 aa)). The segment at 264 to 355 (PVGFDLMDRK…QSIWDTPDAQ (92 aa)) is head domain (RuvB-H). DNA is bound by residues arginine 300, arginine 319, and arginine 324.

The protein belongs to the RuvB family. As to quaternary structure, homohexamer. Forms an RuvA(8)-RuvB(12)-Holliday junction (HJ) complex. HJ DNA is sandwiched between 2 RuvA tetramers; dsDNA enters through RuvA and exits via RuvB. An RuvB hexamer assembles on each DNA strand where it exits the tetramer. Each RuvB hexamer is contacted by two RuvA subunits (via domain III) on 2 adjacent RuvB subunits; this complex drives branch migration. In the full resolvosome a probable DNA-RuvA(4)-RuvB(12)-RuvC(2) complex forms which resolves the HJ.

The protein resides in the cytoplasm. It catalyses the reaction ATP + H2O = ADP + phosphate + H(+). Its function is as follows. The RuvA-RuvB-RuvC complex processes Holliday junction (HJ) DNA during genetic recombination and DNA repair, while the RuvA-RuvB complex plays an important role in the rescue of blocked DNA replication forks via replication fork reversal (RFR). RuvA specifically binds to HJ cruciform DNA, conferring on it an open structure. The RuvB hexamer acts as an ATP-dependent pump, pulling dsDNA into and through the RuvAB complex. RuvB forms 2 homohexamers on either side of HJ DNA bound by 1 or 2 RuvA tetramers; 4 subunits per hexamer contact DNA at a time. Coordinated motions by a converter formed by DNA-disengaged RuvB subunits stimulates ATP hydrolysis and nucleotide exchange. Immobilization of the converter enables RuvB to convert the ATP-contained energy into a lever motion, pulling 2 nucleotides of DNA out of the RuvA tetramer per ATP hydrolyzed, thus driving DNA branch migration. The RuvB motors rotate together with the DNA substrate, which together with the progressing nucleotide cycle form the mechanistic basis for DNA recombination by continuous HJ branch migration. Branch migration allows RuvC to scan DNA until it finds its consensus sequence, where it cleaves and resolves cruciform DNA. The protein is Holliday junction branch migration complex subunit RuvB of Burkholderia multivorans (strain ATCC 17616 / 249).